We begin with the raw amino-acid sequence, 148 residues long: UPF0178 protein CA_C2825 (148 aa).

The protein belongs to the UPF0178 family.

This is UPF0178 protein CA_C2825 from Clostridium acetobutylicum (strain ATCC 824 / DSM 792 / JCM 1419 / IAM 19013 / LMG 5710 / NBRC 13948 / NRRL B-527 / VKM B-1787 / 2291 / W).